We begin with the raw amino-acid sequence, 169 residues long: Desumoylating isopeptidase 1 (169 aa).

One can recognise a PPPDE domain in the interval 8 to 150 (HLVRLYVYDM…LGQALRPLLD (143 aa)). Residue His-39 is part of the active site. The Nuclear export signal 1 motif lies at 84-92 (IFLEYLSSL). Cys-109 is an active-site residue. The Nuclear export signal 2 signature appears at 140 to 154 (PLGQALRPLLDSVQI).

Belongs to the DeSI family. In terms of assembly, homodimer.

Its subcellular location is the cytoplasm. The protein resides in the nucleus. The catalysed reaction is S-hexadecanoyl-L-cysteinyl-[protein] + H2O = L-cysteinyl-[protein] + hexadecanoate + H(+). In terms of biological role, protease which deconjugates SUMO1, SUMO2 and SUMO3 from some substrate proteins. Has isopeptidase but not SUMO-processing activity. Collaborates with ubqln4 in the export of ubiquitinated proteins from the nucleus to the cytoplasm. Exhibits palmitoyl protein thioesterase (S-depalmitoylation) activity towards synthetic substrates 4-methylumbelliferyl-6-S-palmitoyl-beta-D-glucopyranoside and S-depalmitoylation probe 5 (DPP-5). This chain is Desumoylating isopeptidase 1, found in Xenopus laevis (African clawed frog).